A 428-amino-acid polypeptide reads, in one-letter code: Histidinol dehydrogenase (428 aa).

The substrate site is built by serine 232, glutamine 254, and histidine 257. Zn(2+) contacts are provided by glutamine 254 and histidine 257. Residues glutamate 324 and histidine 325 each act as proton acceptor in the active site. Substrate-binding residues include histidine 325, aspartate 358, glutamate 412, and histidine 417. Residue aspartate 358 participates in Zn(2+) binding. Histidine 417 contributes to the Zn(2+) binding site.

This sequence belongs to the histidinol dehydrogenase family. Requires Zn(2+) as cofactor.

It carries out the reaction L-histidinol + 2 NAD(+) + H2O = L-histidine + 2 NADH + 3 H(+). The protein operates within amino-acid biosynthesis; L-histidine biosynthesis; L-histidine from 5-phospho-alpha-D-ribose 1-diphosphate: step 9/9. Functionally, catalyzes the sequential NAD-dependent oxidations of L-histidinol to L-histidinaldehyde and then to L-histidine. In Thermotoga maritima (strain ATCC 43589 / DSM 3109 / JCM 10099 / NBRC 100826 / MSB8), this protein is Histidinol dehydrogenase.